Reading from the N-terminus, the 960-residue chain is Vacuolar membrane protease (960 aa).

The Cytoplasmic portion of the chain corresponds to 1-57; it reads MADNNSSSGSLVIDEQDYDVHEAGQQGQQGQQKHQQRQQERPSLITRVFRSVFGYRK. Residues 22-41 form a disordered region; it reads EAGQQGQQGQQKHQQRQQER. The span at 24 to 33 shows a compositional bias: low complexity; that stretch reads GQQGQQGQQK. Residues 58-78 traverse the membrane as a helical segment; sequence TSLSLFVVATIALCVSLSYID. Residues 79–401 are Vacuolar-facing; it reads NSVDFISFPT…FTISTSQLFK (323 aa). The N-linked (GlcNAc...) asparagine glycan is linked to Asn148. Residues His189 and Asp201 each contribute to the Zn(2+) site. Catalysis depends on Glu235, which acts as the Proton acceptor. Residues Glu236, Glu261, and His333 each coordinate Zn(2+). Residues 402–422 form a helical membrane-spanning segment; it reads INVALLTVFPILNGLLLLYTI. At 423–432 the chain is on the cytoplasmic side; that stretch reads RSRKWQVSFS. The helical transmembrane segment at 433-453 threads the bilayer; it reads SAISIPVALLVTMFIVVYLVV. The Vacuolar portion of the chain corresponds to 454 to 476; the sequence is ESYKSFNQYLPSSRPLLLVATIT. Residues 477-497 form a helical membrane-spanning segment; the sequence is SILLLVFSIILVAFSFFSIIA. Residues 498 to 502 are Cytoplasmic-facing; it reads EENLR. Residues 503 to 523 form a helical membrane-spanning segment; it reads LLAIVELSFAYWVGLAFTTHG. The Vacuolar segment spans residues 524-535; it reads LSGAESARHSGE. A helical membrane pass occupies residues 536 to 556; that stretch reads FAVSILFTLEAVASFLGLIGW. Residues 557-635 are Cytoplasmic-facing; it reads SLCRNRSHLQ…FGYDWSLQYL (79 aa). Positions 587-605 are enriched in basic and acidic residues; it reads NDHDHEHRHGHEDNEHGEA. Residues 587–614 are disordered; sequence NDHDHEHRHGHEDNEHGEAHVQQQSQSR. Residues 636 to 656 traverse the membrane as a helical segment; sequence ITVPLSIFIIYNSGWLVLEGV. A glycan (N-linked (GlcNAc...) asparagine) is linked at Asn657. The Vacuolar segment spans residues 657–668; the sequence is NKTLQESAKAET. Residues 669–689 form a helical membrane-spanning segment; sequence FVYNLLWIVSVSLVLPLIPFA. Topologically, residues 690 to 696 are cytoplasmic; that stretch reads GKLNRYM. The chain crosses the membrane as a helical span at residues 697 to 717; the sequence is VFVLIAIGVLGTLLVHVVQPF. The Vacuolar segment spans residues 718–960; sequence NEANPLKLRF…LVAYTKQVHV (243 aa). Asn736, Asn763, Asn803, Asn875, and Asn921 each carry an N-linked (GlcNAc...) asparagine glycan.

It belongs to the peptidase M28 family. Zn(2+) is required as a cofactor.

The protein resides in the vacuole membrane. In terms of biological role, may be involved in vacuolar sorting and osmoregulation. This chain is Vacuolar membrane protease, found in Lodderomyces elongisporus (strain ATCC 11503 / CBS 2605 / JCM 1781 / NBRC 1676 / NRRL YB-4239) (Yeast).